We begin with the raw amino-acid sequence, 122 residues long: NADH-quinone oxidoreductase subunit A (122 aa).

The next 3 helical transmembrane spans lie at 10 to 30 (MIVLIFLLLGILLPVVALTLG), 66 to 86 (IFALLFVIFDVETLFLYPWAV), and 91 to 111 (LGLFALIEMLIFVVMLLVGLA).

This sequence belongs to the complex I subunit 3 family. NDH-1 is composed of 14 different subunits. Subunits NuoA, H, J, K, L, M, N constitute the membrane sector of the complex.

The protein resides in the cell membrane. The enzyme catalyses a quinone + NADH + 5 H(+)(in) = a quinol + NAD(+) + 4 H(+)(out). Its function is as follows. NDH-1 shuttles electrons from NADH, via FMN and iron-sulfur (Fe-S) centers, to quinones in the respiratory chain. The immediate electron acceptor for the enzyme in this species is believed to be a menaquinone. Couples the redox reaction to proton translocation (for every two electrons transferred, four hydrogen ions are translocated across the cytoplasmic membrane), and thus conserves the redox energy in a proton gradient. This Bacillus mycoides (strain KBAB4) (Bacillus weihenstephanensis) protein is NADH-quinone oxidoreductase subunit A.